Consider the following 584-residue polypeptide: Mitochondrial sodium/calcium exchanger protein (584 aa).

Residues 1–26 (MAGRRLNLRWALSVLCVLLMAETVSG) form the signal peptide. The Extracellular portion of the chain corresponds to 27–95 (TRGSSTGAHI…GIFCHFPPSL (69 aa)). N-linked (GlcNAc...) asparagine glycosylation occurs at Asn60. Residues 96–116 (LPLAVTLYVSWLLYLFLILGV) traverse the membrane as a helical segment. Topologically, residues 117-140 (TAAKFFCPNLSAISTTLKLSHNVA) are cytoplasmic. A helical membrane pass occupies residues 141–161 (GVTFLAFGNGAPDIFSALVAF). Residues 162–168 (SDPHTAG) lie on the Extracellular side of the membrane. Residues 169–189 (LALGALFGAGVLVTTVVAGGI) traverse the membrane as a helical segment. Residues 190 to 200 (TILHPFMAASR) are Cytoplasmic-facing. A helical membrane pass occupies residues 201 to 221 (PFFRDIVFYMVAVFLTFLMLF). Residues 222 to 226 (RGRVT) are Extracellular-facing. Residues 227–247 (LAWALGYLGLYVFYVVTVILC) form a helical membrane-spanning segment. Residues 248 to 325 (TWIYQRQRRG…KWRRKSAYWK (78 aa)) are Cytoplasmic-facing. Ser258 is subject to Phosphoserine; by PKA. The chain crosses the membrane as a helical span at residues 326 to 346 (ALKVFKLPVEFLLLLTVPVVD). At 347–360 (PDKDDQNWKRPLNC) the chain is on the extracellular side. A helical transmembrane segment spans residues 361–381 (LHLVISPLVVVLTLQSGTYGV). At 382–383 (YE) the chain is on the cytoplasmic side. A helical transmembrane segment spans residues 384–404 (IGGLVPVWVVVVIAGTALASV). The Extracellular segment spans residues 405 to 416 (TFFATSDSQPPR). A helical transmembrane segment spans residues 417–437 (LHWLFAFLGFLTSALWINAAA). The Cytoplasmic segment spans residues 438–445 (TEVVNILR). Residues 446–466 (SLGVVFRLSNTVLGLTLLAWG) traverse the membrane as a helical segment. Residues 467-487 (NSIGDAFSDFTLARQGYPRMA) lie on the Extracellular side of the membrane. Residues 488-508 (FSACFGGIIFNILVGVGLGCL) form a helical membrane-spanning segment. The Cytoplasmic portion of the chain corresponds to 509–524 (LQISRSHTEVKLEPDG). The chain crosses the membrane as a helical span at residues 525 to 545 (LLVWVLAGALGLSLVFSLVSV). The Extracellular segment spans residues 546 to 558 (PLQCFQLSRVYGF). A helical transmembrane segment spans residues 559–579 (CLLLFYLNFLVVALLTEFGVI). Residues 580–584 (HLKSM) are Cytoplasmic-facing.

It belongs to the Ca(2+):cation antiporter (CaCA) (TC 2.A.19) family. SLC24A subfamily. Post-translationally, phosphorylation at Ser-258 by PKA prevents calcium overload. As to expression, present in pancreatic beta-cells (at protein level).

Its subcellular location is the mitochondrion inner membrane. The enzyme catalyses Ca(2+)(in) + 3 Na(+)(out) = Ca(2+)(out) + 3 Na(+)(in). It catalyses the reaction 3 Li(+)(out) + Ca(2+)(in) = 3 Li(+)(in) + Ca(2+)(out). With respect to regulation, inhibited by the sodium/calcium exchanger inhibitor CGP-37157. Strongly inhibited by zinc. In terms of biological role, mitochondrial sodium/calcium antiporter that mediates sodium-dependent calcium efflux from mitochondrion, by mediating the exchange of 3 sodium ions per 1 calcium ion. Plays a central role in mitochondrial calcium homeostasis by mediating mitochondrial calcium extrusion: calcium efflux is essential for mitochondrial function and cell survival, notably in cardiomyocytes. Regulates rates of glucose-dependent insulin secretion in pancreatic beta-cells during the first phase of insulin secretion: acts by mediating efflux of calcium from mitochondrion, thereby affecting cytoplasmic calcium responses. Required for store-operated Ca(2+) entry (SOCE) and Ca(2+) release-activated Ca(2+) (CRAC) channel regulation: sodium transport by SLC8B1 leads to promote calcium-shuttling that modulates mitochondrial redox status, thereby regulating SOCE activity. Involved in B-lymphocyte chemotaxis. Able to transport Ca(2+) in exchange of either Li(+) or Na(+), explaining how Li(+) catalyzes Ca(2+) exchange. In contrast to other members of the family its function is independent of K(+). The protein is Mitochondrial sodium/calcium exchanger protein of Homo sapiens (Human).